We begin with the raw amino-acid sequence, 139 residues long: Nucleoside diphosphate kinase (139 aa).

Lysine 11, phenylalanine 59, arginine 87, threonine 93, arginine 104, and asparagine 114 together coordinate ATP. Histidine 117 functions as the Pros-phosphohistidine intermediate in the catalytic mechanism.

This sequence belongs to the NDK family. As to quaternary structure, homotetramer. Mg(2+) is required as a cofactor.

It localises to the cytoplasm. The enzyme catalyses a 2'-deoxyribonucleoside 5'-diphosphate + ATP = a 2'-deoxyribonucleoside 5'-triphosphate + ADP. It catalyses the reaction a ribonucleoside 5'-diphosphate + ATP = a ribonucleoside 5'-triphosphate + ADP. Its function is as follows. Major role in the synthesis of nucleoside triphosphates other than ATP. The ATP gamma phosphate is transferred to the NDP beta phosphate via a ping-pong mechanism, using a phosphorylated active-site intermediate. The sequence is that of Nucleoside diphosphate kinase from Flavobacterium johnsoniae (strain ATCC 17061 / DSM 2064 / JCM 8514 / BCRC 14874 / CCUG 350202 / NBRC 14942 / NCIMB 11054 / UW101) (Cytophaga johnsonae).